The primary structure comprises 2153 residues: RNA-directed RNA polymerase L (2153 aa).

H36, E54, D97, E110, and V111 together coordinate Mn(2+). Residue K124 is the For endonuclease activity of the active site. A RdRp catalytic domain is found at 957 to 1143 (TGKKIRFKRK…AVNQEMWKSM (187 aa)). Position 1100 (D1100) interacts with Mg(2+).

The protein belongs to the Bunyavirales RNA polymerase family. Interacts with the viral nucleoprotein. The cofactor is Mn(2+). It depends on Mg(2+) as a cofactor.

The protein resides in the host cytoplasm. Its subcellular location is the host perinuclear region. It catalyses the reaction RNA(n) + a ribonucleoside 5'-triphosphate = RNA(n+1) + diphosphate. Functionally, RNA-dependent RNA polymerase, which is responsible for the replication and transcription of the viral RNA genome using antigenomic RNA as an intermediate. During transcription, synthesizes subgenomic RNAs and assures their capping by a cap-snatching mechanism, which involves the endonuclease activity cleaving the host capped pre-mRNAs. These short capped RNAs are then used as primers for viral transcription. Cleaves ssRNA substrates but not DNA. Seems to downregulate the expression of its own and heterologous mRNAs through its endonuclease activity. This Black Creek Canal orthohantavirus (BCCV) protein is RNA-directed RNA polymerase L.